The chain runs to 452 residues: Adenylyltransferase and sulfurtransferase MOCS3 (452 aa).

ATP contacts are provided by residues Gly-99, Asp-120, 127–131 (SNLHR), Lys-144, and 188–189 (DN). Zn(2+) is bound by residues Cys-230 and Cys-233. The active-site Glycyl thioester intermediate; for adenylyltransferase activity is the Cys-247. Residues Cys-305 and Cys-308 each contribute to the Zn(2+) site. Residues 354 to 450 (KTKAHLLLDV…WTNQVDQSFP (97 aa)) form the Rhodanese domain. Residue Cys-409 is the Cysteine persulfide intermediate; for sulfurtransferase activity of the active site.

In the N-terminal section; belongs to the HesA/MoeB/ThiF family. UBA4 subfamily. The cofactor is Zn(2+).

The protein localises to the cytoplasm. Its subcellular location is the cytosol. The enzyme catalyses [molybdopterin-synthase sulfur-carrier protein]-C-terminal Gly-Gly + ATP + H(+) = [molybdopterin-synthase sulfur-carrier protein]-C-terminal Gly-Gly-AMP + diphosphate. It catalyses the reaction [molybdopterin-synthase sulfur-carrier protein]-C-terminal Gly-Gly-AMP + S-sulfanyl-L-cysteinyl-[cysteine desulfurase] + AH2 = [molybdopterin-synthase sulfur-carrier protein]-C-terminal-Gly-aminoethanethioate + L-cysteinyl-[cysteine desulfurase] + A + AMP + 2 H(+). It functions in the pathway tRNA modification; 5-methoxycarbonylmethyl-2-thiouridine-tRNA biosynthesis. It participates in cofactor biosynthesis; molybdopterin biosynthesis. Its function is as follows. Plays a central role in 2-thiolation of mcm(5)S(2)U at tRNA wobble positions of cytosolic tRNA(Lys), tRNA(Glu) and tRNA(Gln). Also essential during biosynthesis of the molybdenum cofactor. Acts by mediating the C-terminal thiocarboxylation of sulfur carriers URM1 and MOCS2A. Its N-terminus first activates URM1 and MOCS2A as acyl-adenylates (-COAMP), then the persulfide sulfur on the catalytic cysteine is transferred to URM1 and MOCS2A to form thiocarboxylation (-COSH) of their C-terminus. The reaction probably involves hydrogen sulfide that is generated from the persulfide intermediate and that acts as a nucleophile towards URM1 and MOCS2A. Subsequently, a transient disulfide bond is formed. Does not use thiosulfate as sulfur donor; NFS1 probably acting as a sulfur donor for thiocarboxylation reactions. This Drosophila virilis (Fruit fly) protein is Adenylyltransferase and sulfurtransferase MOCS3.